Here is a 204-residue protein sequence, read N- to C-terminus: Urease accessory protein UreG (204 aa).

Gly-12–Thr-19 is a binding site for GTP.

The protein belongs to the SIMIBI class G3E GTPase family. UreG subfamily. Homodimer. UreD, UreF and UreG form a complex that acts as a GTP-hydrolysis-dependent molecular chaperone, activating the urease apoprotein by helping to assemble the nickel containing metallocenter of UreC. The UreE protein probably delivers the nickel.

It localises to the cytoplasm. In terms of biological role, facilitates the functional incorporation of the urease nickel metallocenter. This process requires GTP hydrolysis, probably effectuated by UreG. The protein is Urease accessory protein UreG of Pseudomonas fluorescens (strain ATCC BAA-477 / NRRL B-23932 / Pf-5).